We begin with the raw amino-acid sequence, 34 residues long: Papillosin (34 aa).

In terms of biological role, has strong antibacterial activity against the Gram-positive bacteria M.luteus, S.aureus, B.megaterium, A.viridans and E.faecalis, and against the Gram-negative bacteria K.pneumoniae, E.coli DH5alpha, S.typhimurium, P.aeruginosa and E.aerogenes. Lacks hemolytic activity against sheep erythrocytes. This is Papillosin from Halocynthia papillosa (Red sea-squirt).